Reading from the N-terminus, the 353-residue chain is MTLNPPPSQQTSHSPRRIPNRRVLIVGNYCHDVLIQNGSVVAETLGGAASFISNVLDSSSVSCDLVSKVGHDFRYEVTHSPIVAPEKETTVFEAYFDLGIDGIGHADRVLKRVSACDPILPSDIPDSRFDFGMAVGVGGEILPETLEKMVEICDVVAVDIQALIRVFDPVDGAVKLVDLKESGFYHILHRIGFLKASSDEALFMDVEQMKHLCCVVVTNGEKGCRIYHKDDEMTVPPFLAKQVDPTGAGDSFLGGLIVGLVEGLTVPDAALLGNLFGSITVEHIGQPKFDLMMLQKVKDEVQRRKKQCNISSSHNNDHNEFHERLSPARFSCVDSQLQPKLLVNGHSCDDRSL.

ATP contacts are provided by residues S197, G247 to D250, and N274. D250 serves as the catalytic Proton acceptor.

It belongs to the carbohydrate kinase pfkB family.

The enzyme catalyses myo-inositol + ATP = 1D-myo-inositol 3-phosphate + ADP + H(+). In terms of biological role, kinase that phosphorylates myo-inositol to produce multiple myo-inositol monophosphates. Participates in phytic acid biosynthesis in developing seeds. Phytic acid is the primary storage form of phosphorus in cereal grains and other plant seeds. In Arabidopsis thaliana (Mouse-ear cress), this protein is Inositol 3-kinase.